The chain runs to 511 residues: Probable DNA ligase (511 aa).

Residue Glu208 coordinates ATP. The active-site N6-AMP-lysine intermediate is the Lys210. Positions 215, 230, 259, 299, 377, and 383 each coordinate ATP.

Belongs to the ATP-dependent DNA ligase family. Mg(2+) is required as a cofactor.

The catalysed reaction is ATP + (deoxyribonucleotide)n-3'-hydroxyl + 5'-phospho-(deoxyribonucleotide)m = (deoxyribonucleotide)n+m + AMP + diphosphate.. Functionally, DNA ligase that seals nicks in double-stranded DNA during DNA replication, DNA recombination and DNA repair. The protein is Probable DNA ligase of Streptomyces griseus subsp. griseus (strain JCM 4626 / CBS 651.72 / NBRC 13350 / KCC S-0626 / ISP 5235).